The following is a 96-amino-acid chain: Protein RnfH (96 aa).

Belongs to the UPF0125 (RnfH) family.

The protein is Protein RnfH of Escherichia fergusonii (strain ATCC 35469 / DSM 13698 / CCUG 18766 / IAM 14443 / JCM 21226 / LMG 7866 / NBRC 102419 / NCTC 12128 / CDC 0568-73).